Consider the following 346-residue polypeptide: Phenylalanine--tRNA ligase alpha subunit (346 aa).

Glu-259 is a Mg(2+) binding site.

Belongs to the class-II aminoacyl-tRNA synthetase family. Phe-tRNA synthetase alpha subunit type 1 subfamily. In terms of assembly, tetramer of two alpha and two beta subunits. It depends on Mg(2+) as a cofactor.

Its subcellular location is the cytoplasm. The catalysed reaction is tRNA(Phe) + L-phenylalanine + ATP = L-phenylalanyl-tRNA(Phe) + AMP + diphosphate + H(+). The polypeptide is Phenylalanine--tRNA ligase alpha subunit (Lactococcus lactis subsp. lactis (strain IL1403) (Streptococcus lactis)).